Consider the following 459-residue polypeptide: Inositol-trisphosphate 3-kinase A (459 aa).

A disordered region spans residues 1–29 (MTLPGRPTGMARPRGAGPCSPGLERAPRR). Omega-N-methylarginine occurs at positions 35, 55, and 62. The segment at 49–164 (AAAGEPRARG…TSEDVGQKSH (116 aa)) is disordered. A compositionally biased stretch (low complexity) spans 116 to 132 (RRLSTSSLSSTGSSSLL). Phosphoserine occurs at positions 135 and 195. ATP-binding positions include S195, K207, 247-249 (QDL), and D260. K262 and R283 together coordinate substrate. A calmodulin-binding region spans residues 285-293 (DMYKKMLAV). 310–317 (KPRYMQWR) contacts substrate. ATP-binding residues include K334 and D414. Substrate is bound at residue K417.

This sequence belongs to the inositol phosphokinase (IPK) family.

The protein localises to the cytoplasm. It is found in the cytoskeleton. The enzyme catalyses 1D-myo-inositol 1,4,5-trisphosphate + ATP = 1D-myo-inositol 1,3,4,5-tetrakisphosphate + ADP + H(+). With respect to regulation, activated by calcium/calmodulin. Catalyzes the phosphorylation of 1D-myo-inositol 1,4,5-trisphosphate (InsP3) into 1D-myo-inositol 1,3,4,5-tetrakisphosphate and participates to the regulation of calcium homeostasis. The protein is Inositol-trisphosphate 3-kinase A of Mus musculus (Mouse).